Reading from the N-terminus, the 249-residue chain is Probable aquaporin TIP-type (249 aa).

Transmembrane regions (helical) follow at residues 22-42 (AGLA…GSGI) and 56-76 (AGLI…VSVG). The short motif at 85–87 (NPA) is the NPA 1 element. 3 consecutive transmembrane segments (helical) span residues 103 to 123 (IVYI…LVFV), 137 to 157 (VGVG…VYTV), and 169 to 189 (IGII…LVGG). The NPA 2 motif lies at 197–199 (NPA). A helical membrane pass occupies residues 217–237 (YWAGPLIGGGIAGLVYEVLFI).

Belongs to the MIP/aquaporin (TC 1.A.8) family. TIP (TC 1.A.8.10) subfamily. Expression is highest in root tips, with slightly lower levels of hybridizing mRNA in stems, and whole roots, and much lower levels in nodules and leaves.

The protein resides in the membrane. Aquaporins facilitate the transport of water and small neutral solutes across cell membranes. The chain is Probable aquaporin TIP-type (MCP1) from Medicago sativa (Alfalfa).